The chain runs to 244 residues: Tegument protein UL51 homolog (244 aa).

A lipid anchor (S-palmitoyl cysteine; by host) is attached at Cys10.

It belongs to the herpesviridae UL51 family. Oligomerizes. Interacts with ORF55; this interaction mediates ORF55 incorporation to virions. Post-translationally, phosphorylated. Palmitoylation is necessary for Golgi localization.

The protein resides in the virion tegument. Its subcellular location is the host cytoplasm. It localises to the host Golgi apparatus. Functionally, plays several roles during the time course of infection, including egress of virus particles from the perinuclear space and secondary envelopment of cytoplasmic capsids that bud into specific trans-Golgi network (TGN)-derived membranes. The polypeptide is Tegument protein UL51 homolog (8) (Equus caballus (Horse)).